The following is a 220-amino-acid chain: Adenylate kinase (220 aa).

Residue 10 to 15 (GAGKGT) participates in ATP binding. Residues 30–59 (STGDMLRAAVKAGTPLGVEAKGYMDAGKLV) form an NMP region. AMP-binding positions include threonine 31, arginine 36, 57 to 59 (KLV), 85 to 88 (GFPR), and glutamine 92. Residues 122–159 (GRRTHPASGRTYHVKFNPPKVEGKDDVTGEPLIQRDDD) are LID. ATP is bound by residues arginine 123 and 132–133 (TY). AMP-binding residues include arginine 156 and arginine 167. ATP is bound at residue glycine 206.

It belongs to the adenylate kinase family. In terms of assembly, monomer.

It localises to the cytoplasm. The catalysed reaction is AMP + ATP = 2 ADP. It participates in purine metabolism; AMP biosynthesis via salvage pathway; AMP from ADP: step 1/1. Catalyzes the reversible transfer of the terminal phosphate group between ATP and AMP. Plays an important role in cellular energy homeostasis and in adenine nucleotide metabolism. The protein is Adenylate kinase of Burkholderia multivorans (strain ATCC 17616 / 249).